The chain runs to 427 residues: Acyl-CoA hydrolase 2 (427 aa).

15–83 (LLQKLPSSSL…FLLKQYDYFG (69 aa)) is an a nucleoside 3',5'-cyclic phosphate binding site. Active-site charge relay system residues include aspartate 337, serine 359, and glutamine 409. The Microbody targeting signal signature appears at 425–427 (SKL).

The protein belongs to the C/M/P thioester hydrolase family. In terms of assembly, homotetramer. In terms of tissue distribution, mostly expressed in leaves and flowers, and, to a lower extent, in seedlings and siliques.

The protein localises to the peroxisome matrix. It catalyses the reaction a fatty acyl-CoA + H2O = a fatty acid + CoA + H(+). It carries out the reaction dodecanoyl-CoA + H2O = dodecanoate + CoA + H(+). The enzyme catalyses tetradecanoyl-CoA + H2O = tetradecanoate + CoA + H(+). The catalysed reaction is octadecanoyl-CoA + H2O = octadecanoate + CoA + H(+). It catalyses the reaction (9Z)-hexadecenoyl-CoA + H2O = (9Z)-hexadecenoate + CoA + H(+). It carries out the reaction (5Z,8Z,11Z,14Z)-eicosatetraenoyl-CoA + H2O = (5Z,8Z,11Z,14Z)-eicosatetraenoate + CoA + H(+). The enzyme catalyses hexadecanoyl-CoA + H2O = hexadecanoate + CoA + H(+). The catalysed reaction is (9Z)-octadecenoyl-CoA + H2O = (9Z)-octadecenoate + CoA + H(+). It catalyses the reaction (9Z,12Z)-octadecadienoyl-CoA + H2O = (9Z,12Z)-octadecadienoate + CoA + H(+). The protein operates within lipid metabolism; fatty acid metabolism. Insensitive to feedback inhibition by free coenzyme A (CoASH). In terms of biological role, catalyzes the hydrolysis of acyl-CoAs into free fatty acids and coenzyme A (CoASH), regulating their respective intracellular levels. Active with both medium chain and long chain acyl-CoAs (e.g. 12:0-CoA, 14:0-CoA, 16:0-CoA, 18:0-CoA, 16:1-CoA, 18:1-CoA, 18:2-CoA and 20:4-CoA) as substrates, palmitoleoyl-CoA (16:1-CoA) being the favorite substrate. This Arabidopsis thaliana (Mouse-ear cress) protein is Acyl-CoA hydrolase 2.